A 926-amino-acid polypeptide reads, in one-letter code: DNA mismatch repair protein MutS (926 aa).

Positions 16-40 (VASTPTRRGRPPGSSAARASNGAGS) are disordered. Residues 26–40 (PPGSSAARASNGAGS) are compositionally biased toward low complexity. 658 to 665 (GPNMAGKS) is a binding site for ATP.

The protein belongs to the DNA mismatch repair MutS family.

Functionally, this protein is involved in the repair of mismatches in DNA. It is possible that it carries out the mismatch recognition step. This protein has a weak ATPase activity. This is DNA mismatch repair protein MutS from Granulibacter bethesdensis (strain ATCC BAA-1260 / CGDNIH1).